The following is a 366-amino-acid chain: Latent membrane protein 1 (366 aa).

The Cytoplasmic segment spans residues 1–23 (MERDLERGPPGPPRPPLGPPLSS). Residues 24–44 (SIGLALLLLLLALLFWLYIVL) form a helical membrane-spanning segment. The Extracellular portion of the chain corresponds to 45–51 (SNWTGGA). The helical transmembrane segment at 52-72 (LLVLYSFALMLIIIILIIFIF) threads the bilayer. The Cytoplasmic portion of the chain corresponds to 73–75 (RRD). A helical membrane pass occupies residues 76–96 (LLCPLGGLGLLLLMVTLLLIA). Topologically, residues 97–106 (LWNLHGQALY) are extracellular. Residues 107-127 (LGIVLFIFGCLLVLGLWIYFL) traverse the membrane as a helical segment. The Cytoplasmic portion of the chain corresponds to 128 to 139 (EILWRLGATIWQ). Residues 140–160 (LLAFILAFFLAIILLIIALYL) form a helical membrane-spanning segment. Residues 161–163 (QQN) lie on the Extracellular side of the membrane. Residues 164 to 184 (WWTLLVDLLWLLLFMAILIWM) traverse the membrane as a helical segment. Over 185–366 (YFHGPRHTDE…HGPVQLSYYD (182 aa)) the chain is Cytoplasmic. Positions 194–232 (EHHHDDSLPHPQQATDDSSHESDSNSNEGRHHLLVSGAG) are CTAR1. The tract at residues 194–366 (EHHHDDSLPH…HGPVQLSYYD (173 aa)) is disordered. The Interaction with host TRAF proteins motif lies at 204 to 208 (PQQAT). The span at 210–224 (DSSHESDSNSNEGRH) shows a compositional bias: basic and acidic residues. 2 stretches are compositionally biased toward low complexity: residues 251–267 (NGPQ…PQDP) and 337–346 (PHLPTLLLGT). Residues 332-366 (GGGGDPHLPTLLLGTSGSGGDDDDPHGPVQLSYYD) form a CTAR2 region.

This sequence belongs to the herpesviridae LMP-1 family. In terms of assembly, interacts (via PXQXT motif) with host tumor necrosis factor receptor-associated factor (TRAF) proteins TRAF1, TRAF2, TRAF3 and TRAF5. Interacts with human protein ZMYND11; leading to negatively regulate NF-kappa-B activation. Interacts with host UBE2I; this interaction induces the sumoylation of various cellular proteins. Interacts with host IRF7. Ubiquitinated on the N-terminus.

The protein localises to the host cell membrane. Acts as a CD40 functional homolog to prevent apoptosis of infected B-lymphocytes and drive their proliferation. Functions as a constitutively active tumor necrosis factor receptor that induces the activation of several signaling pathways, including those of the NF-kappa-B family. LMP1 signaling leads to up-regulation of antiapoptotic proteins and provide growth signals in latently infected cells. Interacts with host UBE2I and subsequently affects the sumoylation state of several cellular proteins. For example, induces the sumoylation of host IRF7 thereby limiting its transcriptional activity and modulating the activation of innate immune responses. Also inhibits host IFN-alpha-stimulated STAT2 nuclear translocation and interferon-stimulated response element transcriptional activity by interacting with and inhibiting host TYK2. Induces SUMO expression during viral latency thereby dysregulating the host sumoylation processes. The protein is Latent membrane protein 1 (LMP1) of Homo sapiens (Human).